Consider the following 757-residue polypeptide: Mitofusin-2 (757 aa).

The Cytoplasmic portion of the chain corresponds to 1-604 (MSLLFSRCNS…TQEELMVSMV (604 aa)). The segment at 30–94 (KHFVTAKKKI…VRGISEVLAR (65 aa)) is part of a helix bundle domain, formed by helices from N-terminal and C-terminal regions. Residues 93–342 (ARRHMKVAFF…VRMFEFQNFE (250 aa)) enclose the Dynamin-type G domain. Positions 103–110 (GRTSNGKS) are G1 motif. 106–111 (SNGKST) provides a ligand contact to GTP. T111 carries the phosphothreonine; by PINK1 modification. Residues 129-130 (TT) are G2 motif. The interval 199–202 (DSPG) is G3 motif. 258–261 (NRWD) lines the GTP pocket. Residues 258 to 261 (NRWD) are G4 motif. A region of interest (G5 motif) is located at residue E288. Positions 305 and 307 each coordinate GTP. Residues 359 to 385 (EQHTVRAKQIAEAVRLIMDSLHIAAQE) form a part of a helix bundle domain, formed by helices from N-terminal and C-terminal regions region. Residues 406–434 (KQLELLAQDYKLRIKQITEEVERQVSTAM) are a coiled coil. S442 carries the post-translational modification Phosphoserine. A helical membrane pass occupies residues 605-625 (TGLASLTSRTSMGILVVGGVV). Residue W626 is a topological domain, mitochondrial intermembrane. The chain crosses the membrane as a helical span at residues 627–647 (KAVGWRLIALSFGLYGLLYVY). Topologically, residues 648–757 (ERLTWTTKAK…FTHQYLQPSR (110 aa)) are cytoplasmic. The stretch at 696 to 738 (FAHLCQQVDITRDNLEQEIAAMNKKVEALDSLQSRAKLLRNKA) forms a coiled coil. The interval 722-753 (EALDSLQSRAKLLRNKAGWLDSELNMFTHQYL) is part of a helix bundle domain, formed by helices from N-terminal and C-terminal regions.

This sequence belongs to the TRAFAC class dynamin-like GTPase superfamily. Dynamin/Fzo/YdjA family. Mitofusin subfamily. In terms of assembly, forms homomultimers and heteromultimers with MFN1. Oligomerization is essential for mitochondrion fusion. Interacts with VAT1. Interacts with STOML2; may form heterooligomers. Interacts (phosphorylated) with PRKN. Interacts with EIF2AK3. Interacts with THG1L; THG1L probably functions as a guanyl-nucleotide exchange factor/GEF, activating MFN2. Post-translationally, phosphorylated by PINK1. Ubiquitinated by non-degradative ubiquitin by PRKN, promoting mitochondrial fusion; deubiquitination by USP30 inhibits mitochondrial fusion. Ubiquitinated by HUWE1 when dietary stearate (C18:0) levels are low; ubiquitination inhibits mitochondrial fusion. Ubiquitous. Expression is markedly reduced in ApoE-knockout mouse atherosclerotic arteries.

It is found in the mitochondrion outer membrane. It carries out the reaction GTP + H2O = GDP + phosphate + H(+). In terms of biological role, mitochondrial outer membrane GTPase that mediates mitochondrial clustering and fusion. Mitochondria are highly dynamic organelles, and their morphology is determined by the equilibrium between mitochondrial fusion and fission events. Overexpression induces the formation of mitochondrial networks. Membrane clustering requires GTPase activity and may involve a major rearrangement of the coiled coil domains. Plays a central role in mitochondrial metabolism and may be associated with obesity and/or apoptosis processes. Plays an important role in the regulation of vascular smooth muscle cell proliferation. Involved in the clearance of damaged mitochondria via selective autophagy (mitophagy). Is required for PRKN recruitment to dysfunctional mitochondria. Involved in the control of unfolded protein response (UPR) upon ER stress including activation of apoptosis and autophagy during ER stress. Acts as an upstream regulator of EIF2AK3 and suppresses EIF2AK3 activation under basal conditions. The polypeptide is Mitofusin-2 (Mfn2) (Mus musculus (Mouse)).